The following is a 425-amino-acid chain: Protein CLP1 homolog (425 aa).

Residues Glu-18, Lys-59, and 121 to 126 (DVGKST) each bind ATP.

This sequence belongs to the Clp1 family. Clp1 subfamily.

Its subcellular location is the nucleus. In terms of biological role, required for endonucleolytic cleavage during polyadenylation-dependent pre-mRNA 3'-end formation. In Drosophila grimshawi (Hawaiian fruit fly), this protein is Protein CLP1 homolog (cbc).